We begin with the raw amino-acid sequence, 132 residues long: MRYAVLLAVVLLLGAFTAEAFSPPPFHICKWKLWKCLKWCAPWDWKCRRKCFWKYWWCLKKFGGHYGGYGYGDDGYGGGGYGGGGYGGGYGGGYGGGYGGGYGDVGYGGGYSGGYSGGYSGGYGSYGHRRKY.

A signal peptide spans 1 to 20; it reads MRYAVLLAVVLLLGAFTAEA.

As to expression, prismatic layer of shell (at protein level). Expressed primarily in the mantle with highest level in the mantle edge and lower level in the mantle pallium.

It is found in the secreted. This is Glycine-rich protein 3 from Pinctada maxima (Silver-lipped pearl oyster).